A 160-amino-acid polypeptide reads, in one-letter code: Epithelial membrane protein 1 (160 aa).

The helical transmembrane segment at methionine 1–valine 21 threads the bilayer. Asparagine 43 carries an N-linked (GlcNAc...) asparagine glycan. 3 helical membrane passes run phenylalanine 67 to phenylalanine 87, phenylalanine 95 to isoleucine 115, and phenylalanine 137 to leucine 157.

This sequence belongs to the PMP-22/EMP/MP20 family. As to expression, most prominently found in the gastrointestinal tract, skin, lung, and brain but not in liver.

It is found in the membrane. This is Epithelial membrane protein 1 (Emp1) from Rattus norvegicus (Rat).